A 710-amino-acid chain; its full sequence is Conserved oligomeric Golgi complex subunit 2 (710 aa).

This sequence belongs to the COG2 family. Component of the conserved oligomeric Golgi complex which is composed of eight different subunits and is required for normal Golgi morphology and localization.

The protein resides in the golgi apparatus membrane. Its function is as follows. Required for normal Golgi morphology and function. The polypeptide is Conserved oligomeric Golgi complex subunit 2 (Drosophila melanogaster (Fruit fly)).